The primary structure comprises 351 residues: Carbamoyl phosphate synthase small chain (351 aa).

Residues 1 to 171 form a CPSase region; the sequence is MKGIIYLEDG…IIHIAGNGNK (171 aa). S45, G219, and G221 together coordinate L-glutamine. Residues 171 to 351 form the Glutamine amidotransferase type-1 domain; the sequence is KVAVMDFGIK…TYLFDQFVNL (181 aa). The active-site Nucleophile is the C246. Residues L247, Q250, N288, G290, and Y291 each contribute to the L-glutamine site. Residues H331 and E333 contribute to the active site.

The protein belongs to the CarA family. Composed of two chains; the small (or glutamine) chain promotes the hydrolysis of glutamine to ammonia, which is used by the large (or ammonia) chain to synthesize carbamoyl phosphate. Tetramer of heterodimers (alpha,beta)4.

The enzyme catalyses hydrogencarbonate + L-glutamine + 2 ATP + H2O = carbamoyl phosphate + L-glutamate + 2 ADP + phosphate + 2 H(+). It catalyses the reaction L-glutamine + H2O = L-glutamate + NH4(+). It functions in the pathway amino-acid biosynthesis; L-arginine biosynthesis; carbamoyl phosphate from bicarbonate: step 1/1. The protein operates within pyrimidine metabolism; UMP biosynthesis via de novo pathway; (S)-dihydroorotate from bicarbonate: step 1/3. Small subunit of the glutamine-dependent carbamoyl phosphate synthetase (CPSase). CPSase catalyzes the formation of carbamoyl phosphate from the ammonia moiety of glutamine, carbonate, and phosphate donated by ATP, constituting the first step of 2 biosynthetic pathways, one leading to arginine and/or urea and the other to pyrimidine nucleotides. The small subunit (glutamine amidotransferase) binds and cleaves glutamine to supply the large subunit with the substrate ammonia. The sequence is that of Carbamoyl phosphate synthase small chain from Clostridium acetobutylicum (strain ATCC 824 / DSM 792 / JCM 1419 / IAM 19013 / LMG 5710 / NBRC 13948 / NRRL B-527 / VKM B-1787 / 2291 / W).